The following is a 342-amino-acid chain: Pre-mRNA-splicing factor 18 (342 aa).

Belongs to the PRP18 family. As to quaternary structure, interacts with the spliceosome. Part of a complex containing U4/U6 snRNPs.

The protein resides in the nucleus speckle. Functionally, participates in the second step of pre-mRNA splicing. The chain is Pre-mRNA-splicing factor 18 (prpf18) from Danio rerio (Zebrafish).